The primary structure comprises 305 residues: Olfactory receptor 9G19 (305 aa).

Topologically, residues 1-24 are extracellular; the sequence is MDQNNNTVSEFIMLGFTTDPVIQK. Residues 25 to 45 traverse the membrane as a helical segment; it reads VLFAVFLVVYTLTLMGNSSLI. The Cytoplasmic portion of the chain corresponds to 46–55; sequence MLICNDSRLH. Residues 56–76 form a helical membrane-spanning segment; it reads TPMYFFIGNLSFLDLGLSSVY. Residues 77–96 lie on the Extracellular side of the membrane; it reads TPKILETCISEDKSISFAGC. A disulfide bond links cysteine 96 and cysteine 178. The chain crosses the membrane as a helical span at residues 97-117; sequence VAQFFFSAALDYTECYLLAAM. Over 118–138 the chain is Cytoplasmic; the sequence is AYDRYVAISKPLLYSQAMSLK. Residues 139-159 traverse the membrane as a helical segment; that stretch reads LCVCFVVASYVGGFINSVIIT. The Extracellular segment spans residues 160–204; sequence KDTFALTFCNDNVIDDFFCDIPPLVKLACGKKKSFQSVLFFLLTS. Residues 205–225 form a helical membrane-spanning segment; that stretch reads NVIIPIVFILATYLFIIATIL. The Cytoplasmic segment spans residues 226–236; it reads RIRSTQGRLKA. The chain crosses the membrane as a helical span at residues 237–257; sequence FSTCSSHLISVTLYYGSILYI. At 258–270 the chain is on the extracellular side; it reads YARPRSSYSLDRD. Residues 271 to 291 traverse the membrane as a helical segment; it reads KIVSTFYTVVFPMLNPLIYSL. At 292–305 the chain is on the cytoplasmic side; that stretch reads RNKDVKEALNKLLK.

This sequence belongs to the G-protein coupled receptor 1 family.

The protein localises to the cell membrane. Odorant receptor. The protein is Olfactory receptor 9G19 of Mus musculus (Mouse).